The following is a 209-amino-acid chain: Orotate phosphoribosyltransferase (209 aa).

Residues Arg-96, Lys-100, His-102, and Glu-122–Ser-130 contribute to the 5-phospho-alpha-D-ribose 1-diphosphate site. Ser-126 lines the orotate pocket.

It belongs to the purine/pyrimidine phosphoribosyltransferase family. PyrE subfamily. As to quaternary structure, homodimer. It depends on Mg(2+) as a cofactor.

It catalyses the reaction orotidine 5'-phosphate + diphosphate = orotate + 5-phospho-alpha-D-ribose 1-diphosphate. It participates in pyrimidine metabolism; UMP biosynthesis via de novo pathway; UMP from orotate: step 1/2. In terms of biological role, catalyzes the transfer of a ribosyl phosphate group from 5-phosphoribose 1-diphosphate to orotate, leading to the formation of orotidine monophosphate (OMP). This is Orotate phosphoribosyltransferase from Streptococcus thermophilus (strain CNRZ 1066).